Reading from the N-terminus, the 84-residue chain is Beta-defensin 119 (84 aa).

Positions 1–21 (MKLLYLFLAILLVIEEPVISG) are cleaved as a signal peptide. 3 disulfide bridges follow: cysteine 28–cysteine 55, cysteine 35–cysteine 49, and cysteine 39–cysteine 56.

Belongs to the beta-defensin family.

It localises to the secreted. In terms of biological role, has antibacterial activity. The sequence is that of Beta-defensin 119 (DEFB119) from Pongo pygmaeus (Bornean orangutan).